Reading from the N-terminus, the 377-residue chain is Trans-enoyl reductase FMN2 (377 aa).

Residues 7-370 (NASGGYCLNS…DGVIRGKKLV (364 aa)) enclose the Enoyl reductase (ER) domain. Residues 143 to 173 (LSDMTGNGRSNGYTNGHTNGHTNGHSKGEEE) are disordered. The segment covering 144–155 (SDMTGNGRSNGY) has biased composition (polar residues). Low complexity predominate over residues 156–167 (TNGHTNGHTNGH). Residues 186-189 (ASAS), 209-212 (SPAN), Y227, and 274-275 (LD) each bind NADP(+).

This sequence belongs to the zinc-containing alcohol dehydrogenase family.

It functions in the pathway secondary metabolite biosynthesis. Functionally, trans-enoyl reductase; part of the gene cluster that mediates the biosynthesis of fusamarins, isocoumarin derivatives that show moderate cytotoxicity with IC(50) values between 1 and 50 uM. The polyketide synthase FMN1 probably synthesizes two different polyketides, a tetra- and a pentaketide, containinga varying number of double bonds depending on the selective actions of the trans-enoyl reductase FMN2. Chain fusion will presumably be mediated by the KS domain before finally offloading is catalyzed by the alpha/beta hydrolase fold enzyme FMN3. This is Trans-enoyl reductase FMN2 from Fusarium mangiferae (Mango malformation disease fungus).